A 505-amino-acid chain; its full sequence is Cytochrome P450 9b1 (505 aa).

Cys-449 is a heme binding site.

It belongs to the cytochrome P450 family. It depends on heme as a cofactor.

It is found in the endoplasmic reticulum membrane. The protein resides in the microsome membrane. Functionally, may be involved in the metabolism of insect hormones and in the breakdown of synthetic insecticides. This is Cytochrome P450 9b1 (Cyp9b1) from Drosophila melanogaster (Fruit fly).